The sequence spans 332 residues: Anthranilate phosphoribosyltransferase (332 aa).

5-phospho-alpha-D-ribose 1-diphosphate is bound by residues Gly79, 82–83 (GD), Ser87, 89–92 (NIST), 107–115 (KHGNRSVSS), and Ser119. Position 79 (Gly79) interacts with anthranilate. Ser91 contacts Mg(2+). Residue Asn110 participates in anthranilate binding. Residue Arg165 coordinates anthranilate. Mg(2+) contacts are provided by Asp223 and Glu224.

It belongs to the anthranilate phosphoribosyltransferase family. In terms of assembly, homodimer. It depends on Mg(2+) as a cofactor.

It carries out the reaction N-(5-phospho-beta-D-ribosyl)anthranilate + diphosphate = 5-phospho-alpha-D-ribose 1-diphosphate + anthranilate. Its pathway is amino-acid biosynthesis; L-tryptophan biosynthesis; L-tryptophan from chorismate: step 2/5. Functionally, catalyzes the transfer of the phosphoribosyl group of 5-phosphorylribose-1-pyrophosphate (PRPP) to anthranilate to yield N-(5'-phosphoribosyl)-anthranilate (PRA). This Erwinia tasmaniensis (strain DSM 17950 / CFBP 7177 / CIP 109463 / NCPPB 4357 / Et1/99) protein is Anthranilate phosphoribosyltransferase.